We begin with the raw amino-acid sequence, 273 residues long: MNLLHALILGALQGVTEVLPISSSAHLILVPWLLGWPESGLTFDVALHLGTFLALVVYFRRDIVDMAVSTIDAVKHRSLDTPARRLPFLVIASAVPAALVGKLFETQIEELFRSRPLLIGLFLILFGVGLGLADLFGRKRRFMAQVTVSHALVIGLFQCLALIPGVSRSGITITAGLMLGFNRVGAARFSFLMSLPIVAGAALFKMLHLLDQGIPAGEGLPLAAGIVSSAVTGYISVAFLLRFVQKRSIAPFVWYRLIAGGAVVSVILTGISG.

Transmembrane regions (helical) follow at residues 39 to 59, 86 to 106, 117 to 137, 146 to 166, 189 to 209, 220 to 240, and 249 to 269; these read SGLTFDVALHLGTFLALVVYF, LPFLVIASAVPAALVGKLFET, LLIGLFLILFGVGLGLADLFG, VTVSHALVIGLFQCLALIPGV, FSFLMSLPIVAGAALFKMLHL, LPLAAGIVSSAVTGYISVAFL, and IAPFVWYRLIAGGAVVSVILT.

The protein belongs to the UppP family.

Its subcellular location is the cell inner membrane. The catalysed reaction is di-trans,octa-cis-undecaprenyl diphosphate + H2O = di-trans,octa-cis-undecaprenyl phosphate + phosphate + H(+). Its function is as follows. Catalyzes the dephosphorylation of undecaprenyl diphosphate (UPP). Confers resistance to bacitracin. In Pelobacter propionicus (strain DSM 2379 / NBRC 103807 / OttBd1), this protein is Undecaprenyl-diphosphatase.